The following is a 94-amino-acid chain: Small ribosomal subunit protein bS6 (94 aa).

The protein belongs to the bacterial ribosomal protein bS6 family.

Functionally, binds together with bS18 to 16S ribosomal RNA. This is Small ribosomal subunit protein bS6 from Desulforudis audaxviator (strain MP104C).